Here is a 93-residue protein sequence, read N- to C-terminus: MRTVPLFAACLLLTLMAQAEPLPRAADHSDTKMKGDREDHVAVISFWEEESTSLEDAGAGAGRRCICTTRTCRFPYRRLGTCIFQNRVYTFCC.

Positions 1-19 (MRTVPLFAACLLLTLMAQA) are cleaved as a signal peptide. Residues 20–62 (EPLPRAADHSDTKMKGDREDHVAVISFWEEESTSLEDAGAGAG) constitute a propeptide that is removed on maturation. 3 disulfide bridges follow: C65-C93, C67-C82, and C72-C92.

Belongs to the alpha-defensin family.

The protein localises to the secreted. Its function is as follows. Has antibiotic, anti-fungi and antiviral activity. This is Neutrophil cationic peptide 1 type A from Cavia porcellus (Guinea pig).